The primary structure comprises 20 residues: Fibrinogen (20 aa).

A Vitellogenin domain is found at 1–20 (LHSNLEYQYRYSGRVASGIP).

Secreted into the hemolymph.

The protein localises to the secreted. The protein resides in the extracellular space. Involved in lipid transport. Plays a role in hemolymph clotting. May be involved in wound healing in the cuticle. This is Fibrinogen from Pacifastacus leniusculus (Signal crayfish).